The primary structure comprises 145 residues: UPF0735 ACT domain-containing protein CLH_2637 (145 aa).

The ACT domain maps to 69-144 (TFNLIVKDQT…YVEKIEFVAM (76 aa)).

Belongs to the UPF0735 family.

In Clostridium botulinum (strain Alaska E43 / Type E3), this protein is UPF0735 ACT domain-containing protein CLH_2637.